A 113-amino-acid chain; its full sequence is Iron-sulfur cluster insertion protein ErpA (113 aa).

Iron-sulfur cluster contacts are provided by Cys41, Cys105, and Cys107.

This sequence belongs to the HesB/IscA family. Homodimer. Iron-sulfur cluster serves as cofactor.

In terms of biological role, required for insertion of 4Fe-4S clusters for at least IspG. The sequence is that of Iron-sulfur cluster insertion protein ErpA from Vibrio vulnificus (strain CMCP6).